We begin with the raw amino-acid sequence, 144 residues long: Large ribosomal subunit protein uL16 (144 aa).

It belongs to the universal ribosomal protein uL16 family. In terms of assembly, part of the 50S ribosomal subunit.

Its function is as follows. Binds 23S rRNA and is also seen to make contacts with the A and possibly P site tRNAs. This is Large ribosomal subunit protein uL16 from Porphyromonas gingivalis (strain ATCC 33277 / DSM 20709 / CIP 103683 / JCM 12257 / NCTC 11834 / 2561).